The following is a 623-amino-acid chain: Phosphomethylpyrimidine synthase (623 aa).

Residues asparagine 221, methionine 250, tyrosine 279, histidine 315, 335–337 (SRG), 376–379 (DGLR), and glutamate 415 contribute to the substrate site. Histidine 419 serves as a coordination point for Zn(2+). Tyrosine 442 is a binding site for substrate. Histidine 483 provides a ligand contact to Zn(2+). [4Fe-4S] cluster-binding residues include cysteine 563, cysteine 566, and cysteine 571.

This sequence belongs to the ThiC family. In terms of assembly, homodimer. Requires [4Fe-4S] cluster as cofactor.

The catalysed reaction is 5-amino-1-(5-phospho-beta-D-ribosyl)imidazole + S-adenosyl-L-methionine = 4-amino-2-methyl-5-(phosphooxymethyl)pyrimidine + CO + 5'-deoxyadenosine + formate + L-methionine + 3 H(+). It functions in the pathway cofactor biosynthesis; thiamine diphosphate biosynthesis. In terms of biological role, catalyzes the synthesis of the hydroxymethylpyrimidine phosphate (HMP-P) moiety of thiamine from aminoimidazole ribotide (AIR) in a radical S-adenosyl-L-methionine (SAM)-dependent reaction. This chain is Phosphomethylpyrimidine synthase, found in Parvibaculum lavamentivorans (strain DS-1 / DSM 13023 / NCIMB 13966).